We begin with the raw amino-acid sequence, 553 residues long: CTP synthase (553 aa).

The amidoligase domain stretch occupies residues 1-270 (MTKYVFVTGG…DRLICEELRL (270 aa)). Position 13 (Ser-13) interacts with CTP. Ser-13 is a binding site for UTP. ATP contacts are provided by residues 14–19 (SLGKGI) and Asp-71. The Mg(2+) site is built by Asp-71 and Glu-144. CTP contacts are provided by residues 151-153 (DIE), 191-196 (KTKPTQ), and Lys-227. UTP is bound by residues 191–196 (KTKPTQ) and Lys-227. The Glutamine amidotransferase type-1 domain maps to 295 to 547 (TIGMVGKYVD…VQAALACQQT (253 aa)). An L-glutamine-binding site is contributed by Gly-356. Catalysis depends on Cys-383, which acts as the Nucleophile; for glutamine hydrolysis. L-glutamine contacts are provided by residues 384-387 (LGMQ), Glu-407, and Arg-473. Catalysis depends on residues His-520 and Glu-522.

It belongs to the CTP synthase family. In terms of assembly, homotetramer.

The enzyme catalyses UTP + L-glutamine + ATP + H2O = CTP + L-glutamate + ADP + phosphate + 2 H(+). It catalyses the reaction L-glutamine + H2O = L-glutamate + NH4(+). It carries out the reaction UTP + NH4(+) + ATP = CTP + ADP + phosphate + 2 H(+). It participates in pyrimidine metabolism; CTP biosynthesis via de novo pathway; CTP from UDP: step 2/2. With respect to regulation, allosterically activated by GTP, when glutamine is the substrate; GTP has no effect on the reaction when ammonia is the substrate. The allosteric effector GTP functions by stabilizing the protein conformation that binds the tetrahedral intermediate(s) formed during glutamine hydrolysis. Inhibited by the product CTP, via allosteric rather than competitive inhibition. Its function is as follows. Catalyzes the ATP-dependent amination of UTP to CTP with either L-glutamine or ammonia as the source of nitrogen. Regulates intracellular CTP levels through interactions with the four ribonucleotide triphosphates. This chain is CTP synthase, found in Burkholderia mallei (strain NCTC 10247).